Consider the following 365-residue polypeptide: S-adenosylmethionine:tRNA ribosyltransferase-isomerase (365 aa).

The protein belongs to the QueA family. Monomer.

The protein resides in the cytoplasm. It carries out the reaction 7-aminomethyl-7-carbaguanosine(34) in tRNA + S-adenosyl-L-methionine = epoxyqueuosine(34) in tRNA + adenine + L-methionine + 2 H(+). It participates in tRNA modification; tRNA-queuosine biosynthesis. In terms of biological role, transfers and isomerizes the ribose moiety from AdoMet to the 7-aminomethyl group of 7-deazaguanine (preQ1-tRNA) to give epoxyqueuosine (oQ-tRNA). This Rickettsia rickettsii (strain Iowa) protein is S-adenosylmethionine:tRNA ribosyltransferase-isomerase.